Here is a 90-residue protein sequence, read N- to C-terminus: MAHKKAGGSSRNGRDSAGKRLGVKAFGGEHVIPGNIIARQRGTTWHPGLNVGMGTDHTLFAKVEGRVEFRAKAGGRTFVSVLPMTEAAAE.

The segment at 1–20 is disordered; sequence MAHKKAGGSSRNGRDSAGKR.

The protein belongs to the bacterial ribosomal protein bL27 family.

The chain is Large ribosomal subunit protein bL27 from Nitrobacter hamburgensis (strain DSM 10229 / NCIMB 13809 / X14).